Consider the following 128-residue polypeptide: Large ribosomal subunit protein bL12 (128 aa).

It belongs to the bacterial ribosomal protein bL12 family. In terms of assembly, homodimer. Part of the ribosomal stalk of the 50S ribosomal subunit. Forms a multimeric L10(L12)X complex, where L10 forms an elongated spine to which 2 to 4 L12 dimers bind in a sequential fashion. Binds GTP-bound translation factors.

In terms of biological role, forms part of the ribosomal stalk which helps the ribosome interact with GTP-bound translation factors. Is thus essential for accurate translation. This Corynebacterium glutamicum (strain R) protein is Large ribosomal subunit protein bL12.